We begin with the raw amino-acid sequence, 991 residues long: MAVTTVAQFATELNRPASTLLEQLQHAGVSKASASDPLTDTDKEKLLAYLRTSHGTSGADRKKITLTKKSTSEIKQADASGKARTIQVEVRKKRVFVKRDDPTGASSESHDSQDVQELSAAEEAELQRREEEALREAEALRRQQEEEAAQRQRAAEEQARQEREARERAEREAAERAAAEAAARVAAEAAAALAAAEKAAATAPAPAPVAAVVPKAPAPAPVVAAPTLAVASLGAKPVAPAPTSGMRVIKAADIVAGEAQKQIDLDKRRKAAEAEAAAIRAMMAAPKKVMVAKKPEEPKPVVPAAGAVGKDGIKGTIHRPKTAAGAPAPGAAPGAAAKPGEKKSVKSEKLSSSWADDAKKRGAAAPASKGRAPDVRGGWKAPGGARGGRRGDRGGAVSNFTPPADVQIHEVHVPETISVADLAHKMSVKGSEVIKQLMRLGQMVTINQQLDQETAMIVVEEMGHKAFAAKLDDPDAFLEEENLAEAGESLPRPPVVTVMGHVDHGKTSLLDYIRTSRVAAGEAGGITQHIGAYHVETPRGVITFLDTPGHEAFTAMRARGAKATDIVILVVAADDGVMPQTKEAIAHSKAAGVPIVVAINKIDKPDSNLDRVRSELVAEGVVPEEFGGDAPFCLVSAKTGQGIDTLLEQVLLQAEVLELNAPQEALAKGLVIEARLDKGRGPVATVLVQSGTLKRGDVVLAGQSYGRVRAMLDETGKAAQEAGPSIPVEIQGLTEVPSAGDEFMVLADERRAREIATFRQGKYREVNLNRRQAAKLENMFENMGQGAAQTLALIIKADVQGSQEALAASLLKLSTDEVKVQIVHAAVGGISESDVNLALASKAVIIGFNVRADAGARKLADGNDVDLRYYNVIYDAVDEIKSAMSGMLAPEQREEAIGTAEIRTVFVATKIGTIAGSMVTSGLVRRNCRFRLLRNNIVIYTGEVDSVRRLKDDVKEVKEGFECGIKLKNYTDIAEGDQLEFFEIKEVARTL.

Disordered regions lie at residues 53 to 85 (SHGTSGADRKKITLTKKSTSEIKQADASGKART), 97 to 175 (VKRD…EAAE), and 312 to 395 (GIKG…DRGG). 2 stretches are compositionally biased toward basic and acidic residues: residues 97–113 (VKRDDPTGASSESHDSQ) and 125–175 (ELQR…EAAE). Residues 323–338 (AAGAPAPGAAPGAAAK) are compositionally biased toward low complexity. A compositionally biased stretch (basic and acidic residues) spans 339–349 (PGEKKSVKSEK). Residues 491–658 (PRPPVVTVMG…QVLLQAEVLE (168 aa)) enclose the tr-type G domain. The tract at residues 500–507 (GHVDHGKT) is G1. Residue 500 to 507 (GHVDHGKT) participates in GTP binding. The segment at 525–529 (GITQH) is G2. A G3 region spans residues 546–549 (DTPG). GTP is bound by residues 546-550 (DTPGH) and 600-603 (NKID). Residues 600 to 603 (NKID) are G4. The tract at residues 636–638 (SAK) is G5.

Belongs to the TRAFAC class translation factor GTPase superfamily. Classic translation factor GTPase family. IF-2 subfamily.

The protein resides in the cytoplasm. In terms of biological role, one of the essential components for the initiation of protein synthesis. Protects formylmethionyl-tRNA from spontaneous hydrolysis and promotes its binding to the 30S ribosomal subunits. Also involved in the hydrolysis of GTP during the formation of the 70S ribosomal complex. This chain is Translation initiation factor IF-2, found in Leptothrix cholodnii (strain ATCC 51168 / LMG 8142 / SP-6) (Leptothrix discophora (strain SP-6)).